Here is a 73-residue protein sequence, read N- to C-terminus: RNA-binding protein Hfq (73 aa).

Residues 8–68 (DQFLNQIRKD…ISTFAPQKNV (61 aa)) form the Sm domain.

This sequence belongs to the Hfq family. In terms of assembly, homohexamer.

In terms of biological role, RNA chaperone that binds small regulatory RNA (sRNAs) and mRNAs to facilitate mRNA translational regulation in response to envelope stress, environmental stress and changes in metabolite concentrations. Also binds with high specificity to tRNAs. This Bacillus pumilus (strain SAFR-032) protein is RNA-binding protein Hfq.